Here is a 459-residue protein sequence, read N- to C-terminus: uncharacterized protein (459 aa).

The region spanning 9–67 (KLEVGQTFPVTIKRLGINGEGVGYFKRQVVFIPGALPGEEVVAETTKIQRGFAEAKVKK) is the TRAM domain. [4Fe-4S] cluster contacts are provided by Cys-80, Cys-86, Cys-89, and Cys-168. S-adenosyl-L-methionine contacts are provided by Gln-292, Tyr-321, Asp-342, and Asp-390. Cys-417 (nucleophile) is an active-site residue.

This sequence belongs to the class I-like SAM-binding methyltransferase superfamily. RNA M5U methyltransferase family.

This is an uncharacterized protein from Bacillus cereus (strain ATCC 10987 / NRS 248).